Here is a 1657-residue protein sequence, read N- to C-terminus: Thrombospondin type-1 domain-containing protein 7A (1657 aa).

An N-terminal signal peptide occupies residues 1-47; it reads MGLQARRWASGSRGAAGPRRGVLQLLPLPLPLPLLLLLLLRPGAGRA. The Extracellular portion of the chain corresponds to 48–1607; it reads AAQGEAEAPT…FGPDGRLKTW (1560 aa). 3 TSP type-1 domains span residues 57-116, 120-192, and 194-247; these read TLYL…KVCD, ELYD…IPCQ, and DCIV…SPCE. An N-linked (GlcNAc...) asparagine glycan is attached at Asn-234. The disordered stretch occupies residues 265–311; that stretch reads MPHSRQVRQARRRGKNKEREKDRSKGVKDPEARELIKKKRNRNRQNR. Residues 267–315 are a coiled coil; sequence HSRQVRQARRRGKNKEREKDRSKGVKDPEARELIKKKRNRNRQNRQENK. The span at 269–280 shows a compositional bias: basic residues; it reads RQVRQARRRGKN. Residues 281-299 are compositionally biased toward basic and acidic residues; sequence KEREKDRSKGVKDPEAREL. Over residues 300 to 309 the composition is skewed to basic residues; the sequence is IKKKRNRNRQ. N-linked (GlcNAc...) asparagine glycosylation is present at Asn-332. 16 TSP type-1 domains span residues 360–416, 423–510, 512–574, 634–695, 696–769, 771–831, 832–904, 906–959, 960–1033, 1035–1095, 1096–1163, 1166–1220, 1221–1284, 1286–1341, 1342–1412, and 1414–1475; these read ECQV…LSQG, ATYG…IPCP, ECEV…PACY, DCVL…HPCT, VYHW…LPCK, DCIV…QACQ, SYRW…IPCQ, DCQL…CPCD, KYNA…IPCP, DCKL…SDCN, QYLW…LPCP, CVIS…KNCY, HYDY…VECP, NCQL…KPCY, RWQY…QPCP, and DCYL…GQCY. 3 disulfide bridges follow: Cys-435–Cys-505, Cys-455–Cys-509, and Cys-466–Cys-494. An N-linked (GlcNAc...) asparagine glycan is attached at Asn-450. Asn-500 carries an N-linked (GlcNAc...) asparagine glycan. Cystine bridges form between Cys-635–Cys-677 and Cys-646–Cys-650. N-linked (GlcNAc...) asparagine glycosylation occurs at Asn-679. Cystine bridges form between Cys-689/Cys-694, Cys-707/Cys-764, Cys-728/Cys-768, Cys-739/Cys-752, Cys-772/Cys-814, Cys-783/Cys-787, and Cys-824/Cys-830. Asn-717 is a glycosylation site (N-linked (GlcNAc...) asparagine). Residue Asn-968 is glycosylated (N-linked (GlcNAc...) asparagine). 6 disulfide bridges follow: Cys-972–Cys-1028, Cys-994–Cys-1032, Cys-1005–Cys-1018, Cys-1036–Cys-1073, Cys-1047–Cys-1051, and Cys-1090–Cys-1094. Asn-1043 carries N-linked (GlcNAc...) asparagine glycosylation. Asn-1182 carries N-linked (GlcNAc...) asparagine glycosylation. A disulfide bridge connects residues Cys-1213 and Cys-1219. Asn-1225 carries an N-linked (GlcNAc...) asparagine glycan. 12 disulfide bridges follow: Cys-1232/Cys-1279, Cys-1240/Cys-1283, Cys-1251/Cys-1264, Cys-1287/Cys-1325, Cys-1298/Cys-1302, Cys-1335/Cys-1340, Cys-1351/Cys-1407, Cys-1358/Cys-1411, Cys-1369/Cys-1388, Cys-1415/Cys-1459, Cys-1426/Cys-1430, and Cys-1469/Cys-1474. Asn-1276 carries N-linked (GlcNAc...) asparagine glycosylation. A glycan (N-linked (GlcNAc...) asparagine) is linked at Asn-1366. N-linked (GlcNAc...) asparagine glycosylation is found at Asn-1500 and Asn-1547. The tract at residues 1570–1591 is disordered; the sequence is DVKTSRAVHPTQPSSNPAGRGR. Residues 1608 to 1628 form a helical membrane-spanning segment; sequence VYGVAAGAFVLLIFIVSMIYL. At 1629 to 1657 the chain is on the cytoplasmic side; sequence ACKKPKKPQRRQNNRLKPLTLAYDGDADM.

Post-translationally, proteolytic cleavage in the extracellular region generates a 210 kDa soluble form. Extensively N-glycosylated. Detected on kidney podocytes along the glomerular capillary wall (at protein level).

The protein resides in the cell membrane. It is found in the cell projection. It localises to the secreted. In terms of biological role, plays a role in actin cytoskeleton rearrangement. The soluble form promotes endothelial cell migration and filopodia formation during sprouting angiogenesis via a FAK-dependent mechanism. In Homo sapiens (Human), this protein is Thrombospondin type-1 domain-containing protein 7A (THSD7A).